Reading from the N-terminus, the 429-residue chain is Serine hydroxymethyltransferase (429 aa).

Residues leucine 125 and glycine 129 to leucine 131 each bind (6S)-5,6,7,8-tetrahydrofolate. Lysine 234 bears the N6-(pyridoxal phosphate)lysine mark.

Belongs to the SHMT family. As to quaternary structure, homodimer. Pyridoxal 5'-phosphate is required as a cofactor.

The protein localises to the cytoplasm. The catalysed reaction is (6R)-5,10-methylene-5,6,7,8-tetrahydrofolate + glycine + H2O = (6S)-5,6,7,8-tetrahydrofolate + L-serine. Its pathway is one-carbon metabolism; tetrahydrofolate interconversion. It participates in amino-acid biosynthesis; glycine biosynthesis; glycine from L-serine: step 1/1. In terms of biological role, catalyzes the reversible interconversion of serine and glycine with tetrahydrofolate (THF) serving as the one-carbon carrier. This reaction serves as the major source of one-carbon groups required for the biosynthesis of purines, thymidylate, methionine, and other important biomolecules. Also exhibits THF-independent aldolase activity toward beta-hydroxyamino acids, producing glycine and aldehydes, via a retro-aldol mechanism. The polypeptide is Serine hydroxymethyltransferase (Allorhizobium ampelinum (strain ATCC BAA-846 / DSM 112012 / S4) (Agrobacterium vitis (strain S4))).